The chain runs to 428 residues: Enolase (428 aa).

Gln-163 is a binding site for (2R)-2-phosphoglycerate. The active-site Proton donor is Glu-205. Mg(2+)-binding residues include Asp-243, Glu-286, and Asp-313. The (2R)-2-phosphoglycerate site is built by Lys-338, Arg-367, Ser-368, and Lys-389. Catalysis depends on Lys-338, which acts as the Proton acceptor.

The protein belongs to the enolase family. Mg(2+) is required as a cofactor.

The protein localises to the cytoplasm. The protein resides in the secreted. It localises to the cell surface. The catalysed reaction is (2R)-2-phosphoglycerate = phosphoenolpyruvate + H2O. The protein operates within carbohydrate degradation; glycolysis; pyruvate from D-glyceraldehyde 3-phosphate: step 4/5. In terms of biological role, catalyzes the reversible conversion of 2-phosphoglycerate (2-PG) into phosphoenolpyruvate (PEP). It is essential for the degradation of carbohydrates via glycolysis. This is Enolase from Polaromonas naphthalenivorans (strain CJ2).